The primary structure comprises 719 residues: MNFLNYFYHSKKILLQKIDGQFMKVSLNWLKALGNIKTIDIDNKYSTNTAGFEVEAIESIIIGGEIDHILDISSTANRSDVLSMIGLSREVSALTGSSMFQLYINPIIDIFSKKETIISNHDLLNCDNYFAAIIDEIRVKDSPDWLKNRLLSSGFTHRNLLTDISNYIMLKWGQPINIIDLNKINNMNHKNSLTIRSNFPLGSNDQIKLNNENIELNKNILVTQVNTNVTSIAGIGSNSDFDTDYNTKSILVESAIFKQSVVRKSSRVLNIRTESSIRQERGLNVDNWKNAHFEALALITDLTCGNIRDTFCREKITDHALNINLSIKKVHDILGPIMYNGQTRFLFFEEIQNILHSLNFDLIYQNKENIEVTVPNYRREDVFREIDVIEEIARIYGYHKFRSSVPNIQFNKRLSTKRKFIDKSRSILRNLGLTELVHYSLIKSKGNIALNNPLIQDYSNLRGSLLEGLIESNLYNIKQSNQTIDSFEIGTVFHNDQNKIVETTNLAIILGGNLDIRSTWSHPAHSLNWYEAKGIVENFFQRLNRQIEWTKKDILDGRIKFIQKGKFATLIYNNIIIGIFSELNQATYSELGLNTKLFFLEVNLNILEDCHNEFNYLSYQIQPYSKYPSIIRDLSLIIPKNMEIKYLLKLLDQFYDKDLESTTLFDQYIDESIGKEKKSIGLRFTYRSNEKTLTNSEIDYKQHQLQKKIVKQLNLKIRQ.

Residues 318-403 (DHALNINLSI…RIYGYHKFRS (86 aa)) form the B5 domain. D381, D387, E390, and E391 together coordinate Mg(2+). Residues 625 to 718 (SKYPSIIRDL…IVKQLNLKIR (94 aa)) form the FDX-ACB domain.

Belongs to the phenylalanyl-tRNA synthetase beta subunit family. Type 1 subfamily. In terms of assembly, tetramer of two alpha and two beta subunits. It depends on Mg(2+) as a cofactor.

It is found in the plastid. It localises to the chloroplast. The catalysed reaction is tRNA(Phe) + L-phenylalanine + ATP = L-phenylalanyl-tRNA(Phe) + AMP + diphosphate + H(+). The sequence is that of Phenylalanine--tRNA ligase beta subunit, chloroplastic from Pyropia yezoensis (Susabi-nori).